A 946-amino-acid chain; its full sequence is Glucoamylase 1 (946 aa).

A signal peptide spans 1-20; the sequence is MKLLSKVFVTALGLTSIVNA. N51, N68, N97, N187, N244, N373, N393, N406, and N437 each carry an N-linked (GlcNAc...) asparagine glycan. Catalysis depends on residues D462 and E465. Residue N505 is glycosylated (N-linked (GlcNAc...) asparagine). Positions 517 to 532 are enriched in low complexity; the sequence is AATKTTTTTSSSTSTS. The tract at residues 517 to 541 is disordered; that stretch reads AATKTTTTTSSSTSTSIDGKNTLAP. N570 carries N-linked (GlcNAc...) asparagine glycosylation. D628 functions as the Proton donor in the catalytic mechanism. N704, N772, N801, N895, and N912 each carry an N-linked (GlcNAc...) asparagine glycan.

This sequence belongs to the glycosyl hydrolase 31 family. In terms of processing, the N-terminus is blocked.

It is found in the secreted. It localises to the cell wall. The protein resides in the membrane. It catalyses the reaction Hydrolysis of terminal (1-&gt;4)-linked alpha-D-glucose residues successively from non-reducing ends of the chains with release of beta-D-glucose.. This chain is Glucoamylase 1 (GAM1), found in Candida albicans (strain SC5314 / ATCC MYA-2876) (Yeast).